We begin with the raw amino-acid sequence, 131 residues long: UPF0102 protein YraN (131 aa).

This sequence belongs to the UPF0102 family.

The chain is UPF0102 protein YraN from Salmonella typhi.